We begin with the raw amino-acid sequence, 383 residues long: Probable sphingolipid long chain base-responsive protein pil2 (383 aa).

The residue at position 162 (S162) is a Phosphoserine. Disordered regions lie at residues 292–336 and 356–383; these read PRTD…EDYQ and GEED…PIAA. Residues 311–324 show a composition bias toward low complexity; that stretch reads TTSGTTHSYTSTGS. 2 stretches are compositionally biased toward polar residues: residues 325 to 336 and 368 to 383; these read KRYSQMGTEDYQ and VAET…PIAA.

Phosphorylated by ksg1 and ppk21. Phosphorylation is regulated by sphingolipid long chain bases (LCBs).

Functionally, negative regulator of cell wall integrity (CWI) in unstressed cells, probably by inhibiting protein kinase ksg1/ppk21 activity and regulating their downstream CWI pathways pck2-MAP kinase pathway and protein kinase gad8 pathway. Activity may be regulated by the transient increase of sphingolipid long chain bases (LCBs) during heat stress. The sequence is that of Probable sphingolipid long chain base-responsive protein pil2 (pil2) from Schizosaccharomyces pombe (strain 972 / ATCC 24843) (Fission yeast).